The chain runs to 145 residues: Basic phospholipase A2 cPt10 (145 aa).

A signal peptide spans 1 to 21 (MYPAHLLVLLAVCVSLLGASA). Residues 22–27 (IPPLPL) constitute a propeptide that is removed on maturation. Disulfide bonds link Cys-38–Cys-98, Cys-54–Cys-144, Cys-56–Cys-72, Cys-71–Cys-125, Cys-78–Cys-118, Cys-87–Cys-111, and Cys-105–Cys-116. 3 residues coordinate Ca(2+): Tyr-55, Gly-57, and Gly-59. His-75 is a catalytic residue. Residue Asp-76 participates in Ca(2+) binding. Asp-119 is a catalytic residue.

It belongs to the phospholipase A2 family. Group I subfamily. D49 sub-subfamily. It depends on Ca(2+) as a cofactor. As to expression, expressed by the venom gland.

It is found in the secreted. It catalyses the reaction a 1,2-diacyl-sn-glycero-3-phosphocholine + H2O = a 1-acyl-sn-glycero-3-phosphocholine + a fatty acid + H(+). In terms of biological role, PLA2 catalyzes the calcium-dependent hydrolysis of the 2-acyl groups in 3-sn-phosphoglycerides. The polypeptide is Basic phospholipase A2 cPt10 (Laticauda semifasciata (Black-banded sea krait)).